We begin with the raw amino-acid sequence, 190 residues long: dCTP deaminase (190 aa).

Position 113 to 118 (lysine 113 to arginine 118) interacts with dCTP. Glutamate 139 acts as the Proton donor/acceptor in catalysis. 4 residues coordinate dCTP: glutamine 158, tyrosine 172, lysine 181, and glutamine 182.

The protein belongs to the dCTP deaminase family. Homotrimer.

It carries out the reaction dCTP + H2O + H(+) = dUTP + NH4(+). Its pathway is pyrimidine metabolism; dUMP biosynthesis; dUMP from dCTP (dUTP route): step 1/2. Catalyzes the deamination of dCTP to dUTP. The polypeptide is dCTP deaminase (Chlamydia pneumoniae (Chlamydophila pneumoniae)).